Consider the following 616-residue polypeptide: Chaperone protein HscA homolog (616 aa).

This sequence belongs to the heat shock protein 70 family.

Chaperone involved in the maturation of iron-sulfur cluster-containing proteins. Has a low intrinsic ATPase activity which is markedly stimulated by HscB. In Mannheimia succiniciproducens (strain KCTC 0769BP / MBEL55E), this protein is Chaperone protein HscA homolog.